The chain runs to 284 residues: L-ribulose-5-phosphate 3-epimerase UlaE (284 aa).

This sequence belongs to the L-ribulose-5-phosphate 3-epimerase family.

The enzyme catalyses L-ribulose 5-phosphate = L-xylulose 5-phosphate. Its pathway is cofactor degradation; L-ascorbate degradation; D-xylulose 5-phosphate from L-ascorbate: step 3/4. In terms of biological role, catalyzes the isomerization of L-xylulose-5-phosphate to L-ribulose-5-phosphate. Is involved in the anaerobic L-ascorbate utilization. The protein is L-ribulose-5-phosphate 3-epimerase UlaE of Salmonella choleraesuis (strain SC-B67).